We begin with the raw amino-acid sequence, 123 residues long: Large ribosomal subunit protein uL18 (123 aa).

This sequence belongs to the universal ribosomal protein uL18 family. Part of the 50S ribosomal subunit; part of the 5S rRNA/L5/L18/L25 subcomplex. Contacts the 5S and 23S rRNAs.

This is one of the proteins that bind and probably mediate the attachment of the 5S RNA into the large ribosomal subunit, where it forms part of the central protuberance. The sequence is that of Large ribosomal subunit protein uL18 from Chlamydia pneumoniae (Chlamydophila pneumoniae).